Here is a 1767-residue protein sequence, read N- to C-terminus: E3 ubiquitin-protein ligase listerin (1767 aa).

HEAT repeat units follow at residues 59-96 (SLVD…ERDT), 100-138 (KGVL…KVKK), 273-314 (SAYF…VVCP), 335-372 (NAKK…KLPQ), 380-418 (DFFK…CLRF), 433-473 (LINE…KADA), and 509-547 (VKSV…NIPE). The tract at residues 550–583 (KGDEKSMSSEGENSEGSDGGAQSPLSNTSSDLVS) is disordered. Over residues 572 to 581 (SPLSNTSSDL) the composition is skewed to polar residues. HEAT repeat units follow at residues 621 to 658 (LDSF…KNPA), 676 to 714 (EDGG…KWSS), 1067 to 1104 (SETS…SSDE), 1183 to 1226 (QLLH…IMRF), 1315 to 1353 (GIHS…TLTY), 1378 to 1415 (EHLQ…ELPQ), and 1476 to 1513 (LGYL…LNKL). The segment at 1716 to 1763 (CMICFSVIHGFNYSLPKKACRTCKKKFHSACLYKWFTSSNKSTCPLCR) adopts an RING-type zinc-finger fold.

This sequence belongs to the LTN1 family. Component of the ribosome quality control complex (RQC), composed of at least the E3 ubiquitin ligase LTN1 and NEMF associated with the 60S ribosomal subunit. The complex probably also contains TCF25 as well as VCP/p97 and its ubiquitin-binding cofactors. Post-translationally, autoubiquitinated. As to expression, widely expressed, including in the brain and spinal cord.

It is found in the cytoplasm. The protein localises to the cytosol. The enzyme catalyses S-ubiquitinyl-[E2 ubiquitin-conjugating enzyme]-L-cysteine + [acceptor protein]-L-lysine = [E2 ubiquitin-conjugating enzyme]-L-cysteine + N(6)-ubiquitinyl-[acceptor protein]-L-lysine.. It functions in the pathway protein modification; protein ubiquitination. In terms of biological role, E3 ubiquitin-protein ligase. component of the ribosome quality control complex (RQC), a ribosome-associated complex that mediates ubiquitination and extraction of incompletely synthesized nascent chains for proteasomal degradation. Within the RQC complex, LTN1 is recruited to stalled 60S ribosomal subunits by NEMF and mediates ubiquitination of stalled nascent chains. Ubiquitination leads to VCP/p97 recruitment for extraction and degradation of the incomplete translation product. This Mus musculus (Mouse) protein is E3 ubiquitin-protein ligase listerin (Ltn1).